Reading from the N-terminus, the 338-residue chain is UPF0324 membrane protein HI_1643 (338 aa).

A run of 10 helical transmembrane segments spans residues 5 to 23, 33 to 55, 62 to 84, 94 to 116, 123 to 145, 155 to 177, 222 to 239, 254 to 273, 280 to 302, and 312 to 334; these read PFYFGLIFIAIIAVLANYL, HISALIIAILLGMAIGNTIYPQF, GVLFAKGTLLRAGIVLYGFRLTF, AVVTDAIMLISTFFLTALLGIRY, LVYLTGAGCSICGAAAVMAAEPV, VAIAVVVIFGTLSIFTYPFFYTW, LRVMMLAPFLFMLSWLLT, IPWFAVLFIGVAIFNSFDLL, LFVEIDSFLLISAMAALGLTTQA, and PLVLGVLIYLWLVIGGFLVNYGI.

It belongs to the UPF0324 family.

It is found in the cell membrane. The protein is UPF0324 membrane protein HI_1643 of Haemophilus influenzae (strain ATCC 51907 / DSM 11121 / KW20 / Rd).